A 311-amino-acid polypeptide reads, in one-letter code: Olfactory receptor 4S2 (311 aa).

Residues 1-23 (MEKINNVTEFIFWGLSQSPEIEK) are Extracellular-facing. Asn-6 carries an N-linked (GlcNAc...) asparagine glycan. A helical membrane pass occupies residues 24–47 (VCFVVFSFFYIIILLGNLLIMLTV). Over 48–55 (CLSNLFKS) the chain is Cytoplasmic. The chain crosses the membrane as a helical span at residues 56-77 (PMYFFLSFLSFVDICYSSVTAP). Over 78–98 (KMIVDLLAKDKTISYVGCMLQ) the chain is Extracellular. Cys-95 and Cys-187 are oxidised to a cystine. A helical membrane pass occupies residues 99-118 (LFGVHFFGCTEIFILTVMAY). Topologically, residues 119–137 (DRYVAICKPLHYMTIMNRE) are cytoplasmic. A helical transmembrane segment spans residues 138–156 (TCNKMLLGTWVGGFLHSII). At 157-193 (QVALVVQLPFCGPNEIDHYFCDVHPVLKLACTETYIV) the chain is on the extracellular side. A helical transmembrane segment spans residues 194–217 (GVVVTANSGTIALGSFVILLISYS). Residues 218–233 (IILVSLRKQSAEGRRK) lie on the Cytoplasmic side of the membrane. A helical membrane pass occupies residues 234–256 (ALSTCGSHIAMVVIFFGPCTFMY). The Extracellular portion of the chain corresponds to 257 to 267 (MRPDTTFSEDK). A helical membrane pass occupies residues 268–287 (MVAVFYTIITPMLNPLIYTL). The Cytoplasmic portion of the chain corresponds to 288–311 (RNAEVKNAMKKLWGRNVFLEAKGK).

The protein belongs to the G-protein coupled receptor 1 family.

The protein localises to the cell membrane. In terms of biological role, odorant receptor. This chain is Olfactory receptor 4S2 (OR4S2), found in Homo sapiens (Human).